The chain runs to 154 residues: 6,7-dimethyl-8-ribityllumazine synthase (154 aa).

5-amino-6-(D-ribitylamino)uracil contacts are provided by residues F22, A56–E58, and A80–I82. A (2S)-2-hydroxy-3-oxobutyl phosphate-binding site is contributed by A85–T86. H88 functions as the Proton donor in the catalytic mechanism. F113 contributes to the 5-amino-6-(D-ribitylamino)uracil binding site. R127 serves as a coordination point for (2S)-2-hydroxy-3-oxobutyl phosphate.

This sequence belongs to the DMRL synthase family. Forms an icosahedral capsid composed of 60 subunits, arranged as a dodecamer of pentamers.

It carries out the reaction (2S)-2-hydroxy-3-oxobutyl phosphate + 5-amino-6-(D-ribitylamino)uracil = 6,7-dimethyl-8-(1-D-ribityl)lumazine + phosphate + 2 H2O + H(+). Its pathway is cofactor biosynthesis; riboflavin biosynthesis; riboflavin from 2-hydroxy-3-oxobutyl phosphate and 5-amino-6-(D-ribitylamino)uracil: step 1/2. Its function is as follows. Catalyzes the formation of 6,7-dimethyl-8-ribityllumazine by condensation of 5-amino-6-(D-ribitylamino)uracil with 3,4-dihydroxy-2-butanone 4-phosphate. This is the penultimate step in the biosynthesis of riboflavin. This is 6,7-dimethyl-8-ribityllumazine synthase from Anoxybacillus flavithermus (strain DSM 21510 / WK1).